The sequence spans 84 residues: MYKVKVYVSLKESVLDPQGSAVQHALHSMTYNEVQDVRIGKYMELTIEKSDRDLDVLVKEMCEKLLANTVIEDYRYEVEEVVAQ.

It belongs to the PurS family. In terms of assembly, homodimer or homotetramer. Part of the FGAM synthase complex composed of 1 PurL, 1 PurQ and 2 PurS subunits.

It localises to the cytoplasm. The enzyme catalyses N(2)-formyl-N(1)-(5-phospho-beta-D-ribosyl)glycinamide + L-glutamine + ATP + H2O = 2-formamido-N(1)-(5-O-phospho-beta-D-ribosyl)acetamidine + L-glutamate + ADP + phosphate + H(+). It functions in the pathway purine metabolism; IMP biosynthesis via de novo pathway; 5-amino-1-(5-phospho-D-ribosyl)imidazole from N(2)-formyl-N(1)-(5-phospho-D-ribosyl)glycinamide: step 1/2. Part of the phosphoribosylformylglycinamidine synthase complex involved in the purines biosynthetic pathway. Catalyzes the ATP-dependent conversion of formylglycinamide ribonucleotide (FGAR) and glutamine to yield formylglycinamidine ribonucleotide (FGAM) and glutamate. The FGAM synthase complex is composed of three subunits. PurQ produces an ammonia molecule by converting glutamine to glutamate. PurL transfers the ammonia molecule to FGAR to form FGAM in an ATP-dependent manner. PurS interacts with PurQ and PurL and is thought to assist in the transfer of the ammonia molecule from PurQ to PurL. The sequence is that of Phosphoribosylformylglycinamidine synthase subunit PurS from Bacillus subtilis (strain 168).